The following is a 940-amino-acid chain: Isoleucine--tRNA ligase (940 aa).

Residues 58 to 68 (PYANGSIHIGH) carry the 'HIGH' region motif. Glutamate 564 is an L-isoleucyl-5'-AMP binding site. The 'KMSKS' region motif lies at 605 to 609 (KMSKS). Lysine 608 lines the ATP pocket. Positions 903, 906, 923, and 926 each coordinate Zn(2+).

The protein belongs to the class-I aminoacyl-tRNA synthetase family. IleS type 1 subfamily. As to quaternary structure, monomer. It depends on Zn(2+) as a cofactor.

It is found in the cytoplasm. The catalysed reaction is tRNA(Ile) + L-isoleucine + ATP = L-isoleucyl-tRNA(Ile) + AMP + diphosphate. Catalyzes the attachment of isoleucine to tRNA(Ile). As IleRS can inadvertently accommodate and process structurally similar amino acids such as valine, to avoid such errors it has two additional distinct tRNA(Ile)-dependent editing activities. One activity is designated as 'pretransfer' editing and involves the hydrolysis of activated Val-AMP. The other activity is designated 'posttransfer' editing and involves deacylation of mischarged Val-tRNA(Ile). The chain is Isoleucine--tRNA ligase from Shewanella baltica (strain OS223).